A 454-amino-acid chain; its full sequence is F-box/WD repeat-containing protein 2 (454 aa).

The F-box domain occupies 54–101; it reads RDFLKLLPLELSFYLLKWLDPQTLLTCCLVSKQWNKVISACTEVWQTA. WD repeat units lie at residues 146–183, 185–221, 224–265, and 276–314; these read GHSARVYALYYKDGLLCTGSDDLSAKLWDVSTGQCVYG, QTHTCAAVKFDEQKLVTGSFDNTVACWEWSSGARTQH, GHTG…NTLT, and LQQCKVKSLLHSPGDYILLSADKYEIKIWPIGREINCKC. Lys-298 carries the N6-acetyllysine modification.

In terms of assembly, directly interacts with SKP1 and CUL1.

Its function is as follows. Substrate-recognition component of the SCF (SKP1-CUL1-F-box protein)-type E3 ubiquitin ligase complex. This is F-box/WD repeat-containing protein 2 from Rattus norvegicus (Rat).